A 1039-amino-acid chain; its full sequence is DIS3-like exonuclease 1 (1039 aa).

A CSD1 domain is found at 221 to 309; it reads PEHLPLEILE…KGRNGALCEN (89 aa). The CSD2 domain occupies 359 to 425; it reads VLVMPWDYRI…AEIATILVEN (67 aa). Positions 458 to 807 constitute an RNB domain; it reads RLDLRKTHLV…VHRLLLAAVN (350 aa).

This sequence belongs to the RNR ribonuclease family. As to quaternary structure, component of the RNA exosome complex. Mg(2+) serves as cofactor.

The protein resides in the cytoplasm. The catalysed reaction is Exonucleolytic cleavage in the 3'- to 5'-direction to yield nucleoside 5'-phosphates.. Its function is as follows. Catalytic component of the RNA exosome complex which has 3'-&gt;5' exoribonuclease activity and participates in a multitude of cellular RNA processing and degradation events. The polypeptide is DIS3-like exonuclease 1 (dis3l) (Xenopus tropicalis (Western clawed frog)).